Here is a 229-residue protein sequence, read N- to C-terminus: Putative N-acetylmannosamine-6-phosphate 2-epimerase (229 aa).

The protein belongs to the NanE family.

It carries out the reaction an N-acyl-D-glucosamine 6-phosphate = an N-acyl-D-mannosamine 6-phosphate. It participates in amino-sugar metabolism; N-acetylneuraminate degradation; D-fructose 6-phosphate from N-acetylneuraminate: step 3/5. Its function is as follows. Converts N-acetylmannosamine-6-phosphate (ManNAc-6-P) to N-acetylglucosamine-6-phosphate (GlcNAc-6-P). This chain is Putative N-acetylmannosamine-6-phosphate 2-epimerase, found in Haemophilus ducreyi (strain 35000HP / ATCC 700724).